The following is a 484-amino-acid chain: tRNA sulfurtransferase (484 aa).

In terms of domain architecture, THUMP spans 63–167; it reads EAFGERLACI…NDNLYLIDKR (105 aa). ATP-binding positions include 185-186, Lys267, Gly289, and Gln298; that span reads LI. Residues Cys346 and Cys458 are joined by a disulfide bond. The Rhodanese domain occupies 406-484; that stretch reads INANEIIIDV…GYTNVKVYRP (79 aa). Residue Cys458 is the Cysteine persulfide intermediate of the active site.

The protein belongs to the ThiI family.

The protein resides in the cytoplasm. The enzyme catalyses [ThiI sulfur-carrier protein]-S-sulfanyl-L-cysteine + a uridine in tRNA + 2 reduced [2Fe-2S]-[ferredoxin] + ATP + H(+) = [ThiI sulfur-carrier protein]-L-cysteine + a 4-thiouridine in tRNA + 2 oxidized [2Fe-2S]-[ferredoxin] + AMP + diphosphate. The catalysed reaction is [ThiS sulfur-carrier protein]-C-terminal Gly-Gly-AMP + S-sulfanyl-L-cysteinyl-[cysteine desulfurase] + AH2 = [ThiS sulfur-carrier protein]-C-terminal-Gly-aminoethanethioate + L-cysteinyl-[cysteine desulfurase] + A + AMP + 2 H(+). It functions in the pathway cofactor biosynthesis; thiamine diphosphate biosynthesis. Functionally, catalyzes the ATP-dependent transfer of a sulfur to tRNA to produce 4-thiouridine in position 8 of tRNAs, which functions as a near-UV photosensor. Also catalyzes the transfer of sulfur to the sulfur carrier protein ThiS, forming ThiS-thiocarboxylate. This is a step in the synthesis of thiazole, in the thiamine biosynthesis pathway. The sulfur is donated as persulfide by IscS. This chain is tRNA sulfurtransferase, found in Shewanella halifaxensis (strain HAW-EB4).